We begin with the raw amino-acid sequence, 749 residues long: Disintegrin and metalloproteinase domain-containing protein 10 (749 aa).

Residues 1-18 form the signal peptide; the sequence is MGLLRLVFLLSWAASAGG. Positions 19 to 213 are excised as a propeptide; it reads LYGNPLNKYI…SGPVILRKKR (195 aa). At 19-673 the chain is on the extracellular side; sequence LYGNPLNKYI…NPELYENIAE (655 aa). The short motif at 170–177 is the Cysteine switch element; the sequence is GGCADSSV. Cys172 is a binding site for Zn(2+). The Peptidase M12B domain maps to 220–457; the sequence is NTCQLFIQTD…KENSCFVESG (238 aa). 17 disulfide bridges follow: Cys222-Cys314, Cys345-Cys452, Cys400-Cys436, Cys461-Cys496, Cys472-Cys485, Cys474-Cys480, Cys484-Cys516, Cys504-Cys512, Cys511-Cys537, Cys525-Cys544, Cys531-Cys563, Cys556-Cys568, Cys573-Cys599, Cys581-Cys608, Cys583-Cys598, Cys595-Cys640, and Cys633-Cys646. N-linked (GlcNAc...) asparagine glycans are attached at residues Asn268 and Asn279. His384 is a binding site for Zn(2+). Glu385 is a catalytic residue. The Zn(2+) site is built by His388 and His394. The N-linked (GlcNAc...) asparagine glycan is linked to Asn440. Residues 458–552 enclose the Disintegrin domain; it reads QPICGNGLVE…QCPPSEPREN (95 aa). Asn552 is a glycosylation site (N-linked (GlcNAc...) asparagine). Residues 674 to 694 traverse the membrane as a helical segment; sequence WIVAHWWAVLLMGIALIMLMA. Over 695-749 the chain is Cytoplasmic; that stretch reads GFIKICSVHTPSSNPKLPPPKPLPGTLKRRRPPQTTQQPSRQRPRENYQMGHMRH. The segment at 705-749 is disordered; that stretch reads PSSNPKLPPPKPLPGTLKRRRPPQTTQQPSRQRPRENYQMGHMRH. The SH3-binding signature appears at 709 to 716; it reads PKLPPPKP. Thr720 carries the post-translational modification Phosphothreonine. Positions 723–729 match the SH3-binding motif; the sequence is RRRPPQT.

Requires Zn(2+) as cofactor. In terms of processing, the precursor is cleaved by furin and PCSK7.

Its subcellular location is the membrane. The enzyme catalyses Endopeptidase of broad specificity.. Its function is as follows. Controls the proteolytic processing of Notch and mediates lateral inhibition during neurogenesis. The protein is Disintegrin and metalloproteinase domain-containing protein 10 (adam10) of Xenopus laevis (African clawed frog).